The following is a 292-amino-acid chain: ATP synthase gamma chain (292 aa).

Belongs to the ATPase gamma chain family. In terms of assembly, F-type ATPases have 2 components, CF(1) - the catalytic core - and CF(0) - the membrane proton channel. CF(1) has five subunits: alpha(3), beta(3), gamma(1), delta(1), epsilon(1). CF(0) has three main subunits: a, b and c.

It localises to the cell inner membrane. Functionally, produces ATP from ADP in the presence of a proton gradient across the membrane. The gamma chain is believed to be important in regulating ATPase activity and the flow of protons through the CF(0) complex. The protein is ATP synthase gamma chain of Brucella ovis (strain ATCC 25840 / 63/290 / NCTC 10512).